We begin with the raw amino-acid sequence, 128 residues long: Small ribosomal subunit protein uS9 (128 aa).

The span at 97–113 (RSEGFMTRDSRSVERKK) shows a compositional bias: basic and acidic residues. Residues 97-128 (RSEGFMTRDSRSVERKKPGQPKARRRFQFSKR) form a disordered region. Positions 114–128 (PGQPKARRRFQFSKR) are enriched in basic residues.

This sequence belongs to the universal ribosomal protein uS9 family.

This Phocaeicola vulgatus (strain ATCC 8482 / DSM 1447 / JCM 5826 / CCUG 4940 / NBRC 14291 / NCTC 11154) (Bacteroides vulgatus) protein is Small ribosomal subunit protein uS9.